The primary structure comprises 161 residues: Nucleoside diphosphate kinase (161 aa).

ATP is bound by residues lysine 13, phenylalanine 61, arginine 89, threonine 95, arginine 106, and asparagine 116. Catalysis depends on histidine 119, which acts as the Pros-phosphohistidine intermediate.

It belongs to the NDK family. Mg(2+) serves as cofactor.

The protein resides in the cytoplasm. It carries out the reaction a 2'-deoxyribonucleoside 5'-diphosphate + ATP = a 2'-deoxyribonucleoside 5'-triphosphate + ADP. The enzyme catalyses a ribonucleoside 5'-diphosphate + ATP = a ribonucleoside 5'-triphosphate + ADP. Its function is as follows. Major role in the synthesis of nucleoside triphosphates other than ATP. The ATP gamma phosphate is transferred to the NDP beta phosphate via a ping-pong mechanism, using a phosphorylated active-site intermediate. The chain is Nucleoside diphosphate kinase from Halobacterium salinarum (strain ATCC 29341 / DSM 671 / R1).